The following is a 184-amino-acid chain: NADH-quinone oxidoreductase subunit B (184 aa).

Residues cysteine 63, cysteine 64, cysteine 128, and cysteine 158 each coordinate [4Fe-4S] cluster.

Belongs to the complex I 20 kDa subunit family. As to quaternary structure, NDH-1 is composed of 14 different subunits. Subunits NuoB, C, D, E, F, and G constitute the peripheral sector of the complex. Requires [4Fe-4S] cluster as cofactor.

It localises to the cell inner membrane. It carries out the reaction a quinone + NADH + 5 H(+)(in) = a quinol + NAD(+) + 4 H(+)(out). Its function is as follows. NDH-1 shuttles electrons from NADH, via FMN and iron-sulfur (Fe-S) centers, to quinones in the respiratory chain. Couples the redox reaction to proton translocation (for every two electrons transferred, four hydrogen ions are translocated across the cytoplasmic membrane), and thus conserves the redox energy in a proton gradient. The sequence is that of NADH-quinone oxidoreductase subunit B from Stenotrophomonas maltophilia (strain R551-3).